The primary structure comprises 163 residues: uncharacterized protein (163 aa).

This is an uncharacterized protein from Schizosaccharomyces pombe (strain 972 / ATCC 24843) (Fission yeast).